We begin with the raw amino-acid sequence, 159 residues long: 6,7-dimethyl-8-ribityllumazine synthase (159 aa).

Residues F22, 57–59 (AVE), and 81–83 (AVI) contribute to the 5-amino-6-(D-ribitylamino)uracil site. Residue 86-87 (GT) participates in (2S)-2-hydroxy-3-oxobutyl phosphate binding. Catalysis depends on H89, which acts as the Proton donor. A 5-amino-6-(D-ribitylamino)uracil-binding site is contributed by F114. Position 128 (R128) interacts with (2S)-2-hydroxy-3-oxobutyl phosphate.

The protein belongs to the DMRL synthase family. Forms an icosahedral capsid composed of 60 subunits, arranged as a dodecamer of pentamers.

The catalysed reaction is (2S)-2-hydroxy-3-oxobutyl phosphate + 5-amino-6-(D-ribitylamino)uracil = 6,7-dimethyl-8-(1-D-ribityl)lumazine + phosphate + 2 H2O + H(+). Its pathway is cofactor biosynthesis; riboflavin biosynthesis; riboflavin from 2-hydroxy-3-oxobutyl phosphate and 5-amino-6-(D-ribitylamino)uracil: step 1/2. Catalyzes the formation of 6,7-dimethyl-8-ribityllumazine by condensation of 5-amino-6-(D-ribitylamino)uracil with 3,4-dihydroxy-2-butanone 4-phosphate. This is the penultimate step in the biosynthesis of riboflavin. The polypeptide is 6,7-dimethyl-8-ribityllumazine synthase (Shewanella baltica (strain OS155 / ATCC BAA-1091)).